The primary structure comprises 242 residues: Peptidase E (242 aa).

Active-site charge relay system residues include serine 123, aspartate 138, and histidine 160.

Belongs to the peptidase S51 family.

It localises to the cytoplasm. The catalysed reaction is Dipeptidase E catalyzes the hydrolysis of dipeptides Asp-|-Xaa. It does not act on peptides with N-terminal Glu, Asn or Gln, nor does it cleave isoaspartyl peptides.. Functionally, hydrolyzes dipeptides containing N-terminal aspartate residues. May play a role in allowing the cell to use peptide aspartate to spare carbon otherwise required for the synthesis of the aspartate family of amino acids. This Nostoc sp. (strain PCC 7120 / SAG 25.82 / UTEX 2576) protein is Peptidase E.